Here is a 420-residue protein sequence, read N- to C-terminus: Probable protein phosphatase 2C 76 (420 aa).

A PPM-type phosphatase domain is found at 101-347; that stretch reads SCGYCSFRGK…DNITCIVVKF (247 aa). Mn(2+)-binding residues include D137, G138, D299, and D338. Residues 353–420 are disordered; the sequence is ESPKIETNAM…PETKGEKAGE (68 aa). Residues 403–420 are compositionally biased toward basic and acidic residues; that stretch reads PDPKPETEPETKGEKAGE.

It belongs to the PP2C family. It depends on Mg(2+) as a cofactor. The cofactor is Mn(2+).

The enzyme catalyses O-phospho-L-seryl-[protein] + H2O = L-seryl-[protein] + phosphate. It carries out the reaction O-phospho-L-threonyl-[protein] + H2O = L-threonyl-[protein] + phosphate. This Arabidopsis thaliana (Mouse-ear cress) protein is Probable protein phosphatase 2C 76.